A 233-amino-acid chain; its full sequence is Aspartate/glutamate leucyltransferase (233 aa).

Belongs to the R-transferase family. Bpt subfamily.

It is found in the cytoplasm. The catalysed reaction is N-terminal L-glutamyl-[protein] + L-leucyl-tRNA(Leu) = N-terminal L-leucyl-L-glutamyl-[protein] + tRNA(Leu) + H(+). It catalyses the reaction N-terminal L-aspartyl-[protein] + L-leucyl-tRNA(Leu) = N-terminal L-leucyl-L-aspartyl-[protein] + tRNA(Leu) + H(+). In terms of biological role, functions in the N-end rule pathway of protein degradation where it conjugates Leu from its aminoacyl-tRNA to the N-termini of proteins containing an N-terminal aspartate or glutamate. In Vibrio campbellii (strain ATCC BAA-1116), this protein is Aspartate/glutamate leucyltransferase.